We begin with the raw amino-acid sequence, 464 residues long: MYLSDFLYIVPEITVLGSALALLVLGMFTSERRVRSMSLISVAIAAVLACKELIYFSGEEVSLFGGFVVRTAHTCLARAVVAVSGLFAFLLFFFAKRSYRYEFAVLMLFAFLGTLTLVEAHHFLSFYLSFELIGFASYILVCFNRSSIKASEAAIKFFVLGALSSCIMLYGISLVYGYASEFSLGVVSKVLGGEESLGATFGCALVLVGLLFKLGAVPFHMWIPDTYEGAPTVAVVFFTIVTKTAMVLVFAGLMQGVVIPITGFVWSMLLMAALSMVVGEFSAMQQKNVKRLFAYANIGHIGYVLAGMSTGVVTFKPVLFYVVTYLLINVWIFTVLLRYDDEGFEITDVAGLAAKNPFLAFTFVAALLASAGLPPFSGFFAKYTLLKAIGGVDAFGVPTLVCVVFLCLTSIIPCFYCFRIAKVVYFDVPTGEHSATSRNVGLSIMAFVAVTLSLVVVLLRERII.

The next 14 helical transmembrane spans lie at 6–26 (FLYI…LVLG), 36–56 (SMSL…LIYF), 75–95 (CLAR…FFFA), 101–121 (YEFA…VEAH), 123–143 (FLSF…LVCF), 157–177 (FFVL…LVYG), 197–217 (LGAT…LGAV), 231–253 (PTVA…FAGL), 257–279 (VVIP…MVVG), 293–313 (FAYA…TGVV), 317–337 (PVLF…TVLL), 360–380 (AFTF…SGFF), 395–415 (FGVP…IPCF), and 439–459 (NVGL…VVLL).

It belongs to the complex I subunit 2 family. As to quaternary structure, NDH-1 is composed of 14 different subunits. Subunits NuoA, H, J, K, L, M, N constitute the membrane sector of the complex.

It localises to the cell inner membrane. It carries out the reaction a quinone + NADH + 5 H(+)(in) = a quinol + NAD(+) + 4 H(+)(out). Its function is as follows. NDH-1 shuttles electrons from NADH, via FMN and iron-sulfur (Fe-S) centers, to quinones in the respiratory chain. The immediate electron acceptor for the enzyme in this species is believed to be ubiquinone. Couples the redox reaction to proton translocation (for every two electrons transferred, four hydrogen ions are translocated across the cytoplasmic membrane), and thus conserves the redox energy in a proton gradient. The chain is NADH-quinone oxidoreductase subunit N from Anaplasma phagocytophilum (strain HZ).